A 161-amino-acid chain; its full sequence is Dihydrofolate reductase (161 aa).

The 160-residue stretch at 1-160 folds into the DHFR domain; the sequence is MTMVGLIWAQ…LRYRLYSYHR (160 aa). Residue 7 to 9 participates in substrate binding; the sequence is IWA. NADP(+) contacts are provided by residues 8–9 and 16–21; these read WA and IGRGGD. The substrate site is built by aspartate 29 and arginine 34. 45-48 lines the NADP(+) pocket; sequence GRRT. Arginine 62 serves as a coordination point for substrate. NADP(+) contacts are provided by residues 67 to 70, glycine 82, and 96 to 101; these read LSRQ and IGGGQV. Tyrosine 102 and threonine 115 together coordinate substrate.

It belongs to the dihydrofolate reductase family.

It catalyses the reaction (6S)-5,6,7,8-tetrahydrofolate + NADP(+) = 7,8-dihydrofolate + NADPH + H(+). It functions in the pathway cofactor biosynthesis; tetrahydrofolate biosynthesis; 5,6,7,8-tetrahydrofolate from 7,8-dihydrofolate: step 1/1. Key enzyme in folate metabolism. Catalyzes an essential reaction for de novo glycine and purine synthesis, and for DNA precursor synthesis. The chain is Dihydrofolate reductase (folA) from Mycobacterium tuberculosis (strain CDC 1551 / Oshkosh).